The sequence spans 409 residues: uncharacterized protein (409 aa).

10 helical membrane-spanning segments follow: residues 62 to 82 (FSLG…WVWI), 100 to 120 (LLLF…PEAF), 123 to 143 (MGLL…LFAL), 152 to 172 (ASFM…TFWI), 183 to 203 (VVLW…RYWV), 252 to 272 (GTPW…WIYF), 293 to 313 (AQYL…FTAV), 328 to 348 (YNFA…TMWM), 355 to 375 (VLPY…TLVP), and 376 to 396 (FVAN…VAVW).

The protein localises to the cell membrane. This is an uncharacterized protein from Rhizobium meliloti (strain 1021) (Ensifer meliloti).